A 296-amino-acid chain; its full sequence is Tyrosine recombinase XerC (296 aa).

Positions 1–84 constitute a Core-binding (CB) domain; the sequence is MEKIQQAYLY…TLRSFYEYWM (84 aa). The Tyr recombinase domain maps to 105-286; it reads YLPHFFYEEE…TNEQLRKVYL (182 aa). Catalysis depends on residues R145, K169, H238, R241, and H264. The active-site O-(3'-phospho-DNA)-tyrosine intermediate is the Y273.

It belongs to the 'phage' integrase family. XerC subfamily. In terms of assembly, forms a cyclic heterotetrameric complex composed of two molecules of XerC and two molecules of XerD.

The protein resides in the cytoplasm. In terms of biological role, site-specific tyrosine recombinase, which acts by catalyzing the cutting and rejoining of the recombining DNA molecules. The XerC-XerD complex is essential to convert dimers of the bacterial chromosome into monomers to permit their segregation at cell division. It also contributes to the segregational stability of plasmids. The protein is Tyrosine recombinase XerC of Staphylococcus saprophyticus subsp. saprophyticus (strain ATCC 15305 / DSM 20229 / NCIMB 8711 / NCTC 7292 / S-41).